The chain runs to 131 residues: Fumarate reductase subunit C (131 aa).

3 helical membrane-spanning segments follow: residues 30 to 50 (EGTA…LFAL), 57 to 77 (WMGF…LITL), and 109 to 129 (IIKG…YVAL).

Belongs to the FrdC family. Part of an enzyme complex containing four subunits: a flavoprotein (FrdA), an iron-sulfur protein (FrdB), and two hydrophobic anchor proteins (FrdC and FrdD).

It is found in the cell inner membrane. In terms of biological role, two distinct, membrane-bound, FAD-containing enzymes are responsible for the catalysis of fumarate and succinate interconversion; fumarate reductase is used in anaerobic growth, and succinate dehydrogenase is used in aerobic growth. Anchors the catalytic components of the fumarate reductase complex to the cell inner membrane, binds quinones. The protein is Fumarate reductase subunit C of Salmonella heidelberg (strain SL476).